The sequence spans 304 residues: HTH-type transcriptional regulator BenM (304 aa).

Residues 1 to 58 enclose the HTH lysR-type domain; it reads MELRHLRYFVAVVEEQSFTKAADKLCIAQPPLSRQIQNLEEELGIQLLERGSRPVKTT. The segment at residues 18-37 is a DNA-binding region (H-T-H motif); sequence FTKAADKLCIAQPPLSRQIQ. Benzoate contacts are provided by serine 99 and leucine 104. Residue serine 99 participates in cis,cis-muconate binding. Threonine 128 contributes to the cis,cis-muconate binding site. Benzoate-binding residues include phenylalanine 144, arginine 160, and asparagine 202. A cis,cis-muconate-binding site is contributed by phenylalanine 203. Benzoate is bound at residue tyrosine 293.

It belongs to the LysR transcriptional regulatory family. In terms of assembly, homotetramer; dimer of dimers. The dimers can also associate to form linear, higher oligomers (in vitro).

Positive regulator of the ben and cat genes for benzoate degradation. BenM is necessary for ben gene expression but not for expression of the cat genes, which can be regulated by CatM. Binds to the inducers cis,cis-muconate and benzoate. In Acinetobacter baylyi (strain ATCC 33305 / BD413 / ADP1), this protein is HTH-type transcriptional regulator BenM (benM).